Reading from the N-terminus, the 196-residue chain is Imidazoleglycerol-phosphate dehydratase (196 aa).

The protein belongs to the imidazoleglycerol-phosphate dehydratase family.

The protein localises to the cytoplasm. The catalysed reaction is D-erythro-1-(imidazol-4-yl)glycerol 3-phosphate = 3-(imidazol-4-yl)-2-oxopropyl phosphate + H2O. Its pathway is amino-acid biosynthesis; L-histidine biosynthesis; L-histidine from 5-phospho-alpha-D-ribose 1-diphosphate: step 6/9. The chain is Imidazoleglycerol-phosphate dehydratase from Clostridium botulinum (strain 657 / Type Ba4).